A 106-amino-acid chain; its full sequence is Large ribosomal subunit protein eL42 (106 aa).

The interval 36–56 (FAQGKRRYDRKQSGYGGQTKP) is disordered.

It belongs to the eukaryotic ribosomal protein eL42 family.

This chain is Large ribosomal subunit protein eL42 (RPL44), found in Coprinopsis cinerea (strain Okayama-7 / 130 / ATCC MYA-4618 / FGSC 9003) (Inky cap fungus).